Here is a 627-residue protein sequence, read N- to C-terminus: Phosphomethylpyrimidine synthase (627 aa).

A compositionally biased stretch (polar residues) spans 1-24 (MSATQKNNITRLEQLDRQSTQPFP). Positions 1–29 (MSATQKNNITRLEQLDRQSTQPFPNSRKV) are disordered. Residues Asn231, Met260, Tyr289, His325, 345 to 347 (SRG), 386 to 389 (DGLR), and Glu425 each bind substrate. His429 lines the Zn(2+) pocket. Tyr452 contributes to the substrate binding site. His493 serves as a coordination point for Zn(2+). 3 residues coordinate [4Fe-4S] cluster: Cys573, Cys576, and Cys581.

This sequence belongs to the ThiC family. In terms of assembly, homodimer. Requires [4Fe-4S] cluster as cofactor.

It catalyses the reaction 5-amino-1-(5-phospho-beta-D-ribosyl)imidazole + S-adenosyl-L-methionine = 4-amino-2-methyl-5-(phosphooxymethyl)pyrimidine + CO + 5'-deoxyadenosine + formate + L-methionine + 3 H(+). The protein operates within cofactor biosynthesis; thiamine diphosphate biosynthesis. Catalyzes the synthesis of the hydroxymethylpyrimidine phosphate (HMP-P) moiety of thiamine from aminoimidazole ribotide (AIR) in a radical S-adenosyl-L-methionine (SAM)-dependent reaction. The chain is Phosphomethylpyrimidine synthase from Pseudomonas paraeruginosa (strain DSM 24068 / PA7) (Pseudomonas aeruginosa (strain PA7)).